A 651-amino-acid chain; its full sequence is MBT domain-containing protein 1 (651 aa).

Residues 21–55 (SFGMFDGYDSCSEDTSSSSSSDESEEEVAPLPSSL) are disordered. Positions 29 to 41 (DSCSEDTSSSSSS) are enriched in low complexity. An FCS-type zinc finger spans residues 68-103 (PDGKSGMATCEMCGMVGVRDAFYSKTKRFCSVSCSR). Residues cysteine 77, cysteine 80, cysteine 97, and cysteine 101 each coordinate Zn(2+). MBT repeat units follow at residues 164-268 (FSWG…LVPP), 276-373 (TNWK…IGHR), 374-479 (FKRT…LTPP), and 487-583 (FKWF…LQPP). Disordered stretches follow at residues 581–610 (QPPAPQSNKDSQSNISKQKKKSKSQPYKGH) and 629–651 (TFLQGASDQESNGSGSYYIKQEP). Low complexity predominate over residues 586 to 596 (QSNKDSQSNIS). Basic residues predominate over residues 597–610 (KQKKKSKSQPYKGH). The span at 632–643 (QGASDQESNGSG) shows a compositional bias: polar residues.

Monomer. Component of the NuA4 histone acetyltransferase complex.

The protein localises to the nucleus. Its subcellular location is the chromosome. Functionally, chromatin reader component of the NuA4 histone acetyltransferase complex, a multiprotein complex involved in transcriptional activation of select genes principally by acetylation of nucleosomal histones H4 and H2A. The NuA4 complex plays a direct role in repair of DNA double-strand breaks (DSBs) by promoting homologous recombination (HR). MBTD1 specifically recognizes and binds monomethylated and dimethylated 'Lys-20' on histone H4 (H4K20me1 and H4K20me2, respectively). In the NuA4 complex, MBTD1 promotes recruitment of the complex to H4K20me marks by competing with TP53BP1 for binding to H4K20me. Following recruitment to H4K20me at DNA breaks, the NuA4 complex catalyzes acetylation of 'Lys-15' on histone H2A (H2AK15), blocking the ubiquitination mark required for TP53BP1 localization at DNA breaks, thereby promoting homologous recombination (HR). This is MBT domain-containing protein 1 from Xenopus tropicalis (Western clawed frog).